A 345-amino-acid chain; its full sequence is Phenylalanine--tRNA ligase alpha subunit (345 aa).

Mg(2+) is bound at residue Glu-253.

The protein belongs to the class-II aminoacyl-tRNA synthetase family. Phe-tRNA synthetase alpha subunit type 1 subfamily. Tetramer of two alpha and two beta subunits. Mg(2+) serves as cofactor.

The protein resides in the cytoplasm. It carries out the reaction tRNA(Phe) + L-phenylalanine + ATP = L-phenylalanyl-tRNA(Phe) + AMP + diphosphate + H(+). The sequence is that of Phenylalanine--tRNA ligase alpha subunit from Nitratidesulfovibrio vulgaris (strain DSM 19637 / Miyazaki F) (Desulfovibrio vulgaris).